The primary structure comprises 70 residues: Protein SlyX homolog (70 aa).

Belongs to the SlyX family.

The chain is Protein SlyX homolog from Shewanella oneidensis (strain ATCC 700550 / JCM 31522 / CIP 106686 / LMG 19005 / NCIMB 14063 / MR-1).